Reading from the N-terminus, the 144-residue chain is 3-dehydroquinate dehydratase (144 aa).

Residue tyrosine 24 is the Proton acceptor of the active site. Substrate is bound by residues asparagine 76, histidine 82, and aspartate 89. Histidine 102 functions as the Proton donor in the catalytic mechanism. Residues leucine 103–serine 104 and arginine 113 contribute to the substrate site.

The protein belongs to the type-II 3-dehydroquinase family. In terms of assembly, homododecamer.

It carries out the reaction 3-dehydroquinate = 3-dehydroshikimate + H2O. Its pathway is metabolic intermediate biosynthesis; chorismate biosynthesis; chorismate from D-erythrose 4-phosphate and phosphoenolpyruvate: step 3/7. Catalyzes a trans-dehydration via an enolate intermediate. The chain is 3-dehydroquinate dehydratase from Bordetella avium (strain 197N).